The chain runs to 170 residues: MSVKSKQYFNIFIFIISLIFFDQLSKYLVVKYVKLGSVYFSFFENFFRIIHVRNTGILFSIGSNINYSLKKIFFLAMPIFILIFIFSLSLKEKNRIARISLLLIFSGGVGNVIDRLFRPSGVVDFLDFKFYGIFGLDRWPTFNFADSYVVIGMILFLVYDFFIKRKAFNT.

A run of 3 helical transmembrane segments spans residues 9 to 29 (FNIF…KYLV), 72 to 92 (IFFL…SLKE), and 96 to 118 (IARI…RLFR). Active-site residues include Asp-124 and Asp-146. A helical membrane pass occupies residues 143–163 (NFADSYVVIGMILFLVYDFFI).

This sequence belongs to the peptidase A8 family.

The protein resides in the cell inner membrane. The enzyme catalyses Release of signal peptides from bacterial membrane prolipoproteins. Hydrolyzes -Xaa-Yaa-Zaa-|-(S,diacylglyceryl)Cys-, in which Xaa is hydrophobic (preferably Leu), and Yaa (Ala or Ser) and Zaa (Gly or Ala) have small, neutral side chains.. It functions in the pathway protein modification; lipoprotein biosynthesis (signal peptide cleavage). Its function is as follows. This protein specifically catalyzes the removal of signal peptides from prolipoproteins. This Borreliella afzelii (strain PKo) (Borrelia afzelii) protein is Lipoprotein signal peptidase.